A 252-amino-acid chain; its full sequence is uncharacterized protein (252 aa).

An ATP-binding site is contributed by 28–35; it reads GCDGTGKS.

The protein to E.coli YghS and YghT.

This is an uncharacterized protein from Escherichia coli O6:H1 (strain CFT073 / ATCC 700928 / UPEC).